Consider the following 194-residue polypeptide: 3-isopropylmalate dehydratase small subunit (194 aa).

It belongs to the LeuD family. LeuD type 1 subfamily. In terms of assembly, heterodimer of LeuC and LeuD.

The enzyme catalyses (2R,3S)-3-isopropylmalate = (2S)-2-isopropylmalate. The protein operates within amino-acid biosynthesis; L-leucine biosynthesis; L-leucine from 3-methyl-2-oxobutanoate: step 2/4. Functionally, catalyzes the isomerization between 2-isopropylmalate and 3-isopropylmalate, via the formation of 2-isopropylmaleate. In Brevibacillus brevis (strain 47 / JCM 6285 / NBRC 100599), this protein is 3-isopropylmalate dehydratase small subunit.